The sequence spans 163 residues: Transcription antitermination protein NusB (163 aa).

It belongs to the NusB family.

Its function is as follows. Involved in transcription antitermination. Required for transcription of ribosomal RNA (rRNA) genes. Binds specifically to the boxA antiterminator sequence of the ribosomal RNA (rrn) operons. This chain is Transcription antitermination protein NusB, found in Chlorobium luteolum (strain DSM 273 / BCRC 81028 / 2530) (Pelodictyon luteolum).